The primary structure comprises 90 residues: Small ribosomal subunit protein bS20 (90 aa).

The segment covering 1 to 11 (MAHHKSAKKRI) has biased composition (basic residues). The segment at 1–22 (MAHHKSAKKRIRQTERRTEVNR) is disordered. Residues 12-22 (RQTERRTEVNR) are compositionally biased toward basic and acidic residues.

This sequence belongs to the bacterial ribosomal protein bS20 family.

Functionally, binds directly to 16S ribosomal RNA. The polypeptide is Small ribosomal subunit protein bS20 (Paramagnetospirillum magneticum (strain ATCC 700264 / AMB-1) (Magnetospirillum magneticum)).